Consider the following 349-residue polypeptide: Isopentenyl-diphosphate delta-isomerase (349 aa).

6–7 (RK) provides a ligand contact to substrate. FMN is bound by residues 62-64 (AMT), Ser-93, and Asn-122. Gln-152 serves as a coordination point for substrate. Residue Glu-153 coordinates Mg(2+). Residues Lys-184, Thr-214, 258–259 (GG), and 280–281 (AG) each bind FMN.

Belongs to the IPP isomerase type 2 family. As to quaternary structure, homooctamer. Dimer of tetramers. It depends on FMN as a cofactor. Requires NADPH as cofactor. Mg(2+) serves as cofactor.

It localises to the cytoplasm. The enzyme catalyses isopentenyl diphosphate = dimethylallyl diphosphate. Involved in the biosynthesis of isoprenoids. Catalyzes the 1,3-allylic rearrangement of the homoallylic substrate isopentenyl (IPP) to its allylic isomer, dimethylallyl diphosphate (DMAPP). In Bacillus anthracis (strain A0248), this protein is Isopentenyl-diphosphate delta-isomerase.